A 233-amino-acid polypeptide reads, in one-letter code: uncharacterized protein (233 aa).

Transmembrane regions (helical) follow at residues 78–98, 113–133, and 188–208; these read FCLIIISSWAVLPVPGGPVMY, FITCSYSAVLAGNAPSLLFKL, and FLLIRLVGVIGIADMNVYGTI.

Its subcellular location is the membrane. This is an uncharacterized protein from Saccharomyces cerevisiae (strain ATCC 204508 / S288c) (Baker's yeast).